Here is a 630-residue protein sequence, read N- to C-terminus: 1-deoxy-D-xylulose-5-phosphate synthase (630 aa).

Thiamine diphosphate is bound by residues histidine 72 and glycine 113 to serine 115. Aspartate 144 serves as a coordination point for Mg(2+). Thiamine diphosphate-binding positions include glycine 145–alanine 146, asparagine 173, tyrosine 284, and glutamate 367. Residue asparagine 173 participates in Mg(2+) binding.

This sequence belongs to the transketolase family. DXPS subfamily. As to quaternary structure, homodimer. Mg(2+) serves as cofactor. The cofactor is thiamine diphosphate.

The catalysed reaction is D-glyceraldehyde 3-phosphate + pyruvate + H(+) = 1-deoxy-D-xylulose 5-phosphate + CO2. It participates in metabolic intermediate biosynthesis; 1-deoxy-D-xylulose 5-phosphate biosynthesis; 1-deoxy-D-xylulose 5-phosphate from D-glyceraldehyde 3-phosphate and pyruvate: step 1/1. In terms of biological role, catalyzes the acyloin condensation reaction between C atoms 2 and 3 of pyruvate and glyceraldehyde 3-phosphate to yield 1-deoxy-D-xylulose-5-phosphate (DXP). This is 1-deoxy-D-xylulose-5-phosphate synthase from Geobacillus thermodenitrificans (strain NG80-2).